A 65-amino-acid chain; its full sequence is UPF0434 protein IL1511 (65 aa).

It belongs to the UPF0434 family.

The protein is UPF0434 protein IL1511 of Idiomarina loihiensis (strain ATCC BAA-735 / DSM 15497 / L2-TR).